Consider the following 65-residue polypeptide: MMERIQELLEQIVKWLIFTILLVASISLIVVYQQGYIAEALVARATPLAIVVGLSAIAAAIIVKK.

2 consecutive transmembrane segments (helical) span residues 12 to 31 and 41 to 63; these read IVKWLIFTILLVASISLIVV and LVARATPLAIVVGLSAIAAAIIV.

The protein resides in the cell membrane. This is an uncharacterized protein from Halalkalibacterium halodurans (strain ATCC BAA-125 / DSM 18197 / FERM 7344 / JCM 9153 / C-125) (Bacillus halodurans).